The chain runs to 226 residues: MSAFIIGSTGLVGAQLLKVAAESNKFETVHTVSRRPVDGRDKVQGVVETDTAKWPEVIRENSKGVRTFFSAFGTTRADAGGVENFKKIDYGINYECAKAAKEAGIETFVLVSSLGANESSMLFYLKSKGKLENDIIALEFPRTIIIRPGALLGKRQKSQGIANEIFQKWGNMVKGTPFKFTAYPITGEEVAKVAVHLASEPLTQGDGPVVKAVGTSELDHLVKSLE.

The protein belongs to the FMP52 family.

The protein resides in the mitochondrion outer membrane. This is Protein FMP52, mitochondrial (FMP52) from Debaryomyces hansenii (strain ATCC 36239 / CBS 767 / BCRC 21394 / JCM 1990 / NBRC 0083 / IGC 2968) (Yeast).